Consider the following 714-residue polypeptide: ATP-dependent DNA helicase DinG (714 aa).

The 278-residue stretch at 17 to 294 (ALQDQIPDFI…TCMEQFRPKT (278 aa)) folds into the Helicase ATP-binding domain. Position 54–61 (54–61 (APTGVGKT)) interacts with ATP. Residues C120, C194, C199, and C205 each contribute to the [4Fe-4S] cluster site. The DEAH box motif lies at 248–251 (DEGH). Residues 517-698 (HIAEMAAYFR…VFPIEQPAVP (182 aa)) enclose the Helicase C-terminal domain.

This sequence belongs to the helicase family. DinG subfamily. Type 1 sub-subfamily. [4Fe-4S] cluster is required as a cofactor.

The enzyme catalyses Couples ATP hydrolysis with the unwinding of duplex DNA at the replication fork by translocating in the 5'-3' direction. This creates two antiparallel DNA single strands (ssDNA). The leading ssDNA polymer is the template for DNA polymerase III holoenzyme which synthesizes a continuous strand.. It catalyses the reaction ATP + H2O = ADP + phosphate + H(+). Its function is as follows. DNA-dependent ATPase and 5'-3' DNA helicase. Unwinds D-loops, R-loops, forked DNA and G-quadruplex DNA. The protein is ATP-dependent DNA helicase DinG of Salmonella paratyphi A (strain ATCC 9150 / SARB42).